We begin with the raw amino-acid sequence, 108 residues long: UPF0060 membrane protein amb3269 (108 aa).

4 helical membrane-spanning segments follow: residues 4-24 (IPTYILAAFAEIGGCFAFWAW), 31-51 (PLWLVPGMASLGLFAWALTRI), 59-79 (AYAAYGGIYILASLIWMWAVE), and 85-105 (RWDTIGAAICVVGAMVIIFGP).

It belongs to the UPF0060 family.

It is found in the cell inner membrane. This is UPF0060 membrane protein amb3269 from Paramagnetospirillum magneticum (strain ATCC 700264 / AMB-1) (Magnetospirillum magneticum).